The following is a 420-amino-acid chain: Homeobox-containing protein 1 (420 aa).

The HNF-p1 domain maps to 18-49 (DEPRFTIEQIDLLQRLRRTGMTKHEILHALET). Residues 56-139 (EHSDKFGRRS…GKMSPTRYHA (84 aa)) form a disordered region. A Glycyl lysine isopeptide (Lys-Gly) (interchain with G-Cter in SUMO2) cross-link involves residue Lys-60. 2 stretches are compositionally biased toward low complexity: residues 64-73 (RSSYGGSSYG) and 81-93 (ASSS…TQTQ). Residues 94–132 (HSGMSPSPSNSYDTSPQPCTTNQNGRENNERLSTSNGKM) are compositionally biased toward polar residues. Lys-131 is covalently cross-linked (Glycyl lysine isopeptide (Lys-Gly) (interchain with G-Cter in SUMO2)). In terms of domain architecture, POU-specific atypical spans 145 to 241 (RSYSFEASEE…PGATLSMRPA (97 aa)). Residue Ser-148 is modified to Phosphoserine. A Glycyl lysine isopeptide (Lys-Gly) (interchain with G-Cter in SUMO2) cross-link involves residue Lys-161. Ser-170 carries the post-translational modification Phosphoserine. Residues Lys-174, Lys-217, and Lys-310 each participate in a glycyl lysine isopeptide (Lys-Gly) (interchain with G-Cter in SUMO2) cross-link. The homeobox DNA-binding region spans 267–341 (RRGSRFTWRK…NRRKEIKRRA (75 aa)). Positions 353–385 (IDVQSPGGHSNSDDVDGNDYSEQDDSTSHSDHQ) are disordered. Over residues 365 to 377 (DDVDGNDYSEQDD) the composition is skewed to acidic residues. Residue Lys-413 forms a Glycyl lysine isopeptide (Lys-Gly) (interchain with G-Cter in SUMO1); alternate linkage. Lys-413 is covalently cross-linked (Glycyl lysine isopeptide (Lys-Gly) (interchain with G-Cter in SUMO2); alternate).

Associates with the telomerase holoenzyme complex. Interacts with DKC1, XRCC6 and COIL. Ubiquitous. Detected in pancreas, brain, spleen, placenta, prostate, thymus, liver, heart, bone marrow, skeletal muscle, stomach, uterus, testis, kidney, ovary, colon, lung, cardiac muscle and thyroid gland.

It localises to the nucleus. Its subcellular location is the cytoplasm. The protein localises to the chromosome. It is found in the telomere. The protein resides in the cajal body. It localises to the PML body. In terms of biological role, binds directly to 5'-TTAGGG-3' repeats in telomeric DNA. Associates with the telomerase complex at sites of active telomere processing and positively regulates telomere elongation. Important for TERT binding to chromatin, indicating a role in recruitment of the telomerase complex to telomeres. Also plays a role in the alternative lengthening of telomeres (ALT) pathway in telomerase-negative cells where it promotes formation and/or maintenance of ALT-associated promyelocytic leukemia bodies (APBs). Enhances formation of telomere C-circles in ALT cells, suggesting a possible role in telomere recombination. Might also be involved in the DNA damage response at telomeres. The sequence is that of Homeobox-containing protein 1 from Homo sapiens (Human).